Reading from the N-terminus, the 248-residue chain is Anamorsin homolog (248 aa).

Positions 4 to 130 (FKGLQKSLYI…ETGSSARLSF (127 aa)) are N-terminal SAM-like domain. Residues 131–161 (AKKTSSVNVWKISGDDEELIDEEELLDEEDK) are linker. Residues Cys172, Cys181, Cys184, and Cys186 each contribute to the [2Fe-2S] cluster site. Positions 172 to 186 (CSTTGKRKACKNCSC) are fe-S binding site A. The [4Fe-4S] cluster site is built by Cys209, Cys212, Cys220, and Cys223. 2 consecutive short sequence motifs (cx2C motif) follow at residues 209-212 (CGNC) and 220-223 (CSTC). The interval 209 to 223 (CGNCYLGDAFRCSTC) is fe-S binding site B.

Belongs to the anamorsin family. In terms of assembly, monomer. The cofactor is [2Fe-2S] cluster. [4Fe-4S] cluster is required as a cofactor.

The protein resides in the cytoplasm. It localises to the mitochondrion intermembrane space. Its function is as follows. Component of the cytosolic iron-sulfur (Fe-S) protein assembly (CIA) machinery. Required for the maturation of extramitochondrial Fe-S proteins. Part of an electron transfer chain functioning in an early step of cytosolic Fe-S biogenesis, facilitating the de novo assembly of a [4Fe-4S] cluster on the cytosolic Fe-S scaffold complex. Electrons are transferred from NADPH via a FAD- and FMN-containing diflavin oxidoreductase. Together with the diflavin oxidoreductase, also required for the assembly of the diferric tyrosyl radical cofactor of ribonucleotide reductase (RNR), probably by providing electrons for reduction during radical cofactor maturation in the catalytic small subunit. The polypeptide is Anamorsin homolog (Drosophila virilis (Fruit fly)).